The following is a 168-amino-acid chain: Ribosome maturation factor RimM (168 aa).

The 74-residue stretch at 95–168 folds into the PRC barrel domain; it reads KEGDYYWTDL…IIVVEWDADF (74 aa).

This sequence belongs to the RimM family. As to quaternary structure, binds ribosomal protein uS19.

It is found in the cytoplasm. Its function is as follows. An accessory protein needed during the final step in the assembly of 30S ribosomal subunit, possibly for assembly of the head region. Essential for efficient processing of 16S rRNA. May be needed both before and after RbfA during the maturation of 16S rRNA. It has affinity for free ribosomal 30S subunits but not for 70S ribosomes. The chain is Ribosome maturation factor RimM from Coxiella burnetii (strain CbuK_Q154) (Coxiella burnetii (strain Q154)).